Here is a 193-residue protein sequence, read N- to C-terminus: MKSLFRPMIVIFAVLAALTGLAYPAVMTAFGQTVFHNEANGSMIAKNGKVVGSRLIGQQFDAPQYFWGRLSATSPMPYNAQGSSGSNLGPINPALADEVKGRLAALQAAGHQPAGVAVPVDLVTSSGSGLDPEISPAAAAYQIERVAAARKMNVSDVAAIVDRYTRGRQFGVFGEARVNVLELNLALDDAQRG.

Residues 7-27 traverse the membrane as a helical segment; sequence PMIVIFAVLAALTGLAYPAVM.

Belongs to the KdpC family. As to quaternary structure, the system is composed of three essential subunits: KdpA, KdpB and KdpC.

Its subcellular location is the cell inner membrane. In terms of biological role, part of the high-affinity ATP-driven potassium transport (or Kdp) system, which catalyzes the hydrolysis of ATP coupled with the electrogenic transport of potassium into the cytoplasm. This subunit acts as a catalytic chaperone that increases the ATP-binding affinity of the ATP-hydrolyzing subunit KdpB by the formation of a transient KdpB/KdpC/ATP ternary complex. The polypeptide is Potassium-transporting ATPase KdpC subunit (Paraburkholderia phymatum (strain DSM 17167 / CIP 108236 / LMG 21445 / STM815) (Burkholderia phymatum)).